We begin with the raw amino-acid sequence, 370 residues long: Dihydroorotate dehydrogenase (quinone) (370 aa).

Residues 80-84 and Thr104 each bind FMN; that span reads AGFDK. A substrate-binding site is contributed by Lys84. Residue 129-133 coordinates substrate; sequence NRMGF. The FMN site is built by Asn157 and Asn190. Substrate is bound at residue Asn190. The active-site Nucleophile is Ser193. Residue Asn195 coordinates substrate. FMN contacts are provided by Lys226 and Thr254. 255 to 256 provides a ligand contact to substrate; the sequence is NT. FMN is bound by residues Gly278, Gly307, and 328–329; that span reads YT.

It belongs to the dihydroorotate dehydrogenase family. Type 2 subfamily. Monomer. The cofactor is FMN.

The protein resides in the cell membrane. It catalyses the reaction (S)-dihydroorotate + a quinone = orotate + a quinol. It functions in the pathway pyrimidine metabolism; UMP biosynthesis via de novo pathway; orotate from (S)-dihydroorotate (quinone route): step 1/1. Its function is as follows. Catalyzes the conversion of dihydroorotate to orotate with quinone as electron acceptor. This Mycolicibacterium paratuberculosis (strain ATCC BAA-968 / K-10) (Mycobacterium paratuberculosis) protein is Dihydroorotate dehydrogenase (quinone).